A 246-amino-acid chain; its full sequence is Tyrosine recombinase XerD-like (246 aa).

The Core-binding (CB) domain maps to 1 to 72 (MINDINNFIE…AVNQFLFFLY (72 aa)). One can recognise a Tyr recombinase domain in the interval 84–246 (QETEKITLAQ…TPITLERYYR (163 aa)). Residues K149 and R212 contribute to the active site. Y244 serves as the catalytic O-(3'-phospho-DNA)-tyrosine intermediate.

This sequence belongs to the 'phage' integrase family. XerD-like subfamily.

It localises to the cytoplasm. Functionally, putative tyrosine recombinase. Not involved in the cutting and rejoining of the recombining DNA molecules on dif(SL) site. The polypeptide is Tyrosine recombinase XerD-like (Streptococcus agalactiae serotype V (strain ATCC BAA-611 / 2603 V/R)).